The chain runs to 469 residues: GTPase Der (469 aa).

2 EngA-type G domains span residues 30-193 and 203-376; these read PVLA…PEVA and RRVA…ASWD. GTP-binding positions include 36-43, 83-87, 145-148, 209-216, 256-260, and 321-324; these read GRPNVGKS, DTGGW, NKVD, GKPNVGKS, DTAGL, and NKWD. The KH-like domain occupies 377-459; that stretch reads TRIPTGPLNS…PIRINVRVRE (83 aa).

Belongs to the TRAFAC class TrmE-Era-EngA-EngB-Septin-like GTPase superfamily. EngA (Der) GTPase family. Associates with the 50S ribosomal subunit.

GTPase that plays an essential role in the late steps of ribosome biogenesis. The polypeptide is GTPase Der (Mycobacterium ulcerans (strain Agy99)).